Consider the following 854-residue polypeptide: Envelope glycoprotein gp150 (854 aa).

The Extracellular segment spans residues 1–783 (MAEGFAANRQ…WIGKIPQYLK (783 aa)). N-linked (GlcNAc...) asparagine; by host glycosylation is found at Asn220, Asn258, Asn269, Asn274, Asn298, Asn330, Asn336, Asn342, Asn418, Asn422, Asn448, Asn469, Asn481, Asn499, Asn518, Asn531, Asn548, and Asn551. Positions 614–634 (IMLALATVLSIAGAGTGATAI) are fusion peptide. Residues 641–691 (QQVLATHQEALDKITEALKINNLRLVTLEHQMLVIGLKVEAIEKFLYTAFA) are a coiled coil. Residues 660 to 678 (INNLRLVTLEHQMLVIGLK) are immunosuppression. Residues Asn715, Asn719, Asn727, and Asn735 are each glycosylated (N-linked (GlcNAc...) asparagine; by host). Residues 734–770 (YNQTKYLQQKFYEIIMDIEQNNVQGKQGLQKLQNWQD) are a coiled coil. The helical transmembrane segment at 784 to 804 (GLLGGILGIGLGILLLILCLP) threads the bilayer. Topologically, residues 805 to 854 (TLVDCIRNCISKVLGYTVIAMPEIDDEEETVQMELRKNGRQCGMSEKEEE) are cytoplasmic.

In terms of assembly, the mature envelope protein (Env) consists of a trimer of SU-TM heterodimers attached by non-covalent interactions or by a labile interchain disulfide bond. Specific enzymatic cleavages in vivo yield mature proteins. Envelope glycoproteins are synthesized as an inactive precursor that is N-glycosylated and processed likely by host cell furin or by a furin-like protease in the Golgi to yield the mature SU and TM proteins. The cleavage site between SU and TM requires the minimal sequence [KR]-X-[KR]-R.

Its subcellular location is the virion membrane. The protein localises to the host cell membrane. The surface protein (SU) attaches the virus to the host cell by binding to its receptor. This interaction triggers the refolding of the transmembrane protein (TM) and is thought to activate its fusogenic potential by unmasking its fusion peptide. Fusion occurs at the host cell plasma membrane. In terms of biological role, the transmembrane protein (TM) acts as a class I viral fusion protein. Under the current model, the protein has at least 3 conformational states: pre-fusion native state, pre-hairpin intermediate state, and post-fusion hairpin state. During viral and target cell membrane fusion, the coiled coil regions (heptad repeats) assume a trimer-of-hairpins structure, positioning the fusion peptide in close proximity to the C-terminal region of the ectodomain. The formation of this structure appears to drive apposition and subsequent fusion of viral and target cell membranes. Membranes fusion leads to delivery of the nucleocapsid into the cytoplasm. This Feline immunodeficiency virus (strain San Diego) (FIV) protein is Envelope glycoprotein gp150 (env).